A 340-amino-acid polypeptide reads, in one-letter code: GTP 3',8-cyclase (340 aa).

In terms of domain architecture, Radical SAM core spans 8-227 (KLGRPIRDLR…EMIEQNFDIE (220 aa)). Residue Arg-17 coordinates GTP. Residues Cys-24 and Cys-28 each contribute to the [4Fe-4S] cluster site. Tyr-30 contacts S-adenosyl-L-methionine. Cys-31 provides a ligand contact to [4Fe-4S] cluster. Position 71 (Arg-71) interacts with GTP. Gly-75 contacts S-adenosyl-L-methionine. Residue Thr-102 participates in GTP binding. Ser-126 lines the S-adenosyl-L-methionine pocket. Lys-163 is a GTP binding site. Position 197 (Met-197) interacts with S-adenosyl-L-methionine. Residues Cys-261 and Cys-264 each coordinate [4Fe-4S] cluster. 266–268 (RAR) is a GTP binding site. Residue Cys-278 coordinates [4Fe-4S] cluster.

It belongs to the radical SAM superfamily. MoaA family. As to quaternary structure, monomer and homodimer. Requires [4Fe-4S] cluster as cofactor.

It carries out the reaction GTP + AH2 + S-adenosyl-L-methionine = (8S)-3',8-cyclo-7,8-dihydroguanosine 5'-triphosphate + 5'-deoxyadenosine + L-methionine + A + H(+). The protein operates within cofactor biosynthesis; molybdopterin biosynthesis. Functionally, catalyzes the cyclization of GTP to (8S)-3',8-cyclo-7,8-dihydroguanosine 5'-triphosphate. In Staphylococcus saprophyticus subsp. saprophyticus (strain ATCC 15305 / DSM 20229 / NCIMB 8711 / NCTC 7292 / S-41), this protein is GTP 3',8-cyclase.